Here is a 310-residue protein sequence, read N- to C-terminus: Urease accessory protein UreD (310 aa).

It belongs to the UreD family. UreD, UreF and UreG form a complex that acts as a GTP-hydrolysis-dependent molecular chaperone, activating the urease apoprotein by helping to assemble the nickel containing metallocenter of UreC. The UreE protein probably delivers the nickel.

It is found in the cytoplasm. Required for maturation of urease via the functional incorporation of the urease nickel metallocenter. This is Urease accessory protein UreD from Synechococcus sp. (strain RCC307).